Consider the following 221-residue polypeptide: Octanoyltransferase (221 aa).

Residues 31 to 213 (DKSADEIWLV…HFVTILGYNK (183 aa)) enclose the BPL/LPL catalytic domain. Residues 70 to 77 (RGGQITYH), 142 to 144 (SLG), and 155 to 157 (GLA) each bind substrate. Catalysis depends on Cys173, which acts as the Acyl-thioester intermediate.

This sequence belongs to the LipB family.

It is found in the cytoplasm. The catalysed reaction is octanoyl-[ACP] + L-lysyl-[protein] = N(6)-octanoyl-L-lysyl-[protein] + holo-[ACP] + H(+). The protein operates within protein modification; protein lipoylation via endogenous pathway; protein N(6)-(lipoyl)lysine from octanoyl-[acyl-carrier-protein]: step 1/2. Its function is as follows. Catalyzes the transfer of endogenously produced octanoic acid from octanoyl-acyl-carrier-protein onto the lipoyl domains of lipoate-dependent enzymes. Lipoyl-ACP can also act as a substrate although octanoyl-ACP is likely to be the physiological substrate. This Mannheimia succiniciproducens (strain KCTC 0769BP / MBEL55E) protein is Octanoyltransferase.